A 349-amino-acid polypeptide reads, in one-letter code: tRNA N6-adenosine threonylcarbamoyltransferase (349 aa).

Fe cation contacts are provided by His-111 and His-115. Residues 134 to 138 (LVSGG), Asp-167, Gly-180, Asp-184, and Asn-279 each bind substrate. Fe cation is bound at residue Asp-307.

The protein belongs to the KAE1 / TsaD family. The cofactor is Fe(2+).

It localises to the cytoplasm. It carries out the reaction L-threonylcarbamoyladenylate + adenosine(37) in tRNA = N(6)-L-threonylcarbamoyladenosine(37) in tRNA + AMP + H(+). Functionally, required for the formation of a threonylcarbamoyl group on adenosine at position 37 (t(6)A37) in tRNAs that read codons beginning with adenine. Is involved in the transfer of the threonylcarbamoyl moiety of threonylcarbamoyl-AMP (TC-AMP) to the N6 group of A37, together with TsaE and TsaB. TsaD likely plays a direct catalytic role in this reaction. The sequence is that of tRNA N6-adenosine threonylcarbamoyltransferase from Nostoc punctiforme (strain ATCC 29133 / PCC 73102).